Reading from the N-terminus, the 253-residue chain is Short-chain dehydrogenase/reductase ATR9 (253 aa).

NADP(+)-binding residues include Ser-15, Ser-16, Ile-18, Ser-38, Asn-39, Arg-42, Asp-65, and Lys-129. The Proton donor role is filled by Ser-147. Thr-194 is a binding site for NADP(+).

Belongs to the short-chain dehydrogenases/reductases (SDR) family.

It participates in mycotoxin biosynthesis. In terms of biological role, short-chain dehydrogenase/reductase; part of the core atranone cluster (CAC) which products are predicted to catalyze most or all steps of mycotoxin atranone synthesis, starting from geranylgeranyl pyrophosphate (GGPP). The initial cyclization of GGPP to dolabellane is probably performed by the terpene cyclase ATR13. The Baeyer-Villiger oxidation near the end of the atranone synthesis, which converts atranones D and E to atranones F and G is predicted to be catalyzed by the monooxygenase ATR8. Of the CAC's other predicted gene products, the reducing PKS ATR6 might synthesize a polyketide chain. This polyketide is probably transferred onto the atranone backbone by the polyketide transferase ATR5. Other predicted CAC products include 4 oxygenases (ATR2, ATR3, ATR4, and ATR14), 3 short-chain reductases (ATR7, ATR9, and ATR10), and a methyltransferase (ATR12). These may all be involved in the various steps of atranone biosynthesis, although their specific roles must await experimental determination. The polypeptide is Short-chain dehydrogenase/reductase ATR9 (Stachybotrys chlorohalonatus (strain IBT 40285)).